Reading from the N-terminus, the 149-residue chain is Transcriptional regulator MraZ (149 aa).

SpoVT-AbrB domains are found at residues 6 to 52 and 81 to 124; these read HAHR…TPPD and SEEV…DKRE.

This sequence belongs to the MraZ family. As to quaternary structure, forms oligomers.

The protein resides in the cytoplasm. Its subcellular location is the nucleoid. The sequence is that of Transcriptional regulator MraZ from Maridesulfovibrio salexigens (strain ATCC 14822 / DSM 2638 / NCIMB 8403 / VKM B-1763) (Desulfovibrio salexigens).